Consider the following 147-residue polypeptide: Large ribosomal subunit protein bL9 (147 aa).

The protein belongs to the bacterial ribosomal protein bL9 family.

Binds to the 23S rRNA. The chain is Large ribosomal subunit protein bL9 from Sulfurovum sp. (strain NBC37-1).